A 594-amino-acid chain; its full sequence is Alanine--tRNA ligase (594 aa).

Residues histidine 456, histidine 460, cysteine 558, and histidine 562 each contribute to the Zn(2+) site.

It belongs to the class-II aminoacyl-tRNA synthetase family. Zn(2+) is required as a cofactor.

It is found in the cytoplasm. It carries out the reaction tRNA(Ala) + L-alanine + ATP = L-alanyl-tRNA(Ala) + AMP + diphosphate. Catalyzes the attachment of alanine to tRNA(Ala) in a two-step reaction: alanine is first activated by ATP to form Ala-AMP and then transferred to the acceptor end of tRNA(Ala). Also edits incorrectly charged Ser-tRNA(Ala) and Gly-tRNA(Ala) via its editing domain. This chain is Alanine--tRNA ligase (alaS), found in Borrelia garinii subsp. bavariensis (strain ATCC BAA-2496 / DSM 23469 / PBi) (Borreliella bavariensis).